Reading from the N-terminus, the 736-residue chain is Elongation factor 2 (736 aa).

The 244-residue stretch at 18–261 (EQIRNIGITA…MVVKHIPNPR (244 aa)) folds into the tr-type G domain. GTP-binding positions include 27 to 34 (AHVDHGKT), 93 to 97 (DTPGH), and 147 to 150 (NKID). Position 602 is a diphthamide (histidine 602).

Belongs to the TRAFAC class translation factor GTPase superfamily. Classic translation factor GTPase family. EF-G/EF-2 subfamily.

It localises to the cytoplasm. Its function is as follows. Catalyzes the GTP-dependent ribosomal translocation step during translation elongation. During this step, the ribosome changes from the pre-translocational (PRE) to the post-translocational (POST) state as the newly formed A-site-bound peptidyl-tRNA and P-site-bound deacylated tRNA move to the P and E sites, respectively. Catalyzes the coordinated movement of the two tRNA molecules, the mRNA and conformational changes in the ribosome. The polypeptide is Elongation factor 2 (Desulfurococcus amylolyticus (strain DSM 18924 / JCM 16383 / VKM B-2413 / 1221n) (Desulfurococcus kamchatkensis)).